We begin with the raw amino-acid sequence, 340 residues long: Chitinase 7 (340 aa).

The signal sequence occupies residues Met1–Ala32. Positions Glu33–Val73 constitute a Chitin-binding type-1 domain. Cystine bridges form between Cys35–Cys50, Cys44–Cys56, Cys49–Cys63, Cys67–Cys71, Cys118–Cys173, Cys185–Cys193, and Cys293–Cys323.

This sequence belongs to the glycosyl hydrolase 19 family. Chitinase class I subfamily. In terms of tissue distribution, expressed in pistils, stamens and lodicules.

The catalysed reaction is Random endo-hydrolysis of N-acetyl-beta-D-glucosaminide (1-&gt;4)-beta-linkages in chitin and chitodextrins.. Its function is as follows. Hydrolyzes chitin and may play a role in defense against fungal pathogens containing chitin. The sequence is that of Chitinase 7 (Cht7) from Oryza sativa subsp. indica (Rice).